We begin with the raw amino-acid sequence, 467 residues long: tRNA dimethylallyltransferase (467 aa).

Residues 1 to 47 (MAAAAAARAVPVSSGFRGLRRTLPLVVILGATGTGKSTLALQLGQRL) constitute a mitochondrion transit peptide. 32–37 (TGTGKS) is a binding site for dimethylallyl diphosphate. 2 interaction with substrate tRNA regions span residues 55 to 58 (DSMQ) and 183 to 187 (RKVAR). Positions 221–230 (FPNPCILWLH) are core aggregation region. Residues 233–255 (QAVLDERLDKRVDDMLAAGLLEE) are interaction with isopentenylpyrophosphate transferase. 2 interaction with substrate tRNA regions span residues 281 to 283 (QSI) and 313 to 331 (ALKQ…WVKN). A Matrin-type zinc finger spans residues 395–425 (HMCDLCDRIIIGDREWAAHLKSKSHLHQLKK). Residues 432 to 467 (DAVSATGSQSNSPDCDPERIEGESSGQHNQELKASV) form a disordered region. 2 positions are modified to phosphoserine: serine 443 and serine 455.

It belongs to the IPP transferase family.

The protein localises to the mitochondrion. It localises to the cytoplasm. Its subcellular location is the nucleus. The enzyme catalyses adenosine(37) in tRNA + dimethylallyl diphosphate = N(6)-dimethylallyladenosine(37) in tRNA + diphosphate. Its function is as follows. Catalyzes the transfer of a dimethylallyl group onto the adenine at position 37 of both cytosolic and mitochondrial tRNAs, leading to the formation of N6-(dimethylallyl)adenosine (i6A37). Mediates modification of a limited subset of tRNAs: tRNA(Ser)(AGA), tRNA(Ser)(CGA), tRNA(Ser)(UGA), as well as partial modification of the selenocysteine tRNA(Ser)(UCA). TRIT1 is therefore required for selenoprotein expression. The polypeptide is tRNA dimethylallyltransferase (Trit1) (Mus musculus (Mouse)).